Consider the following 586-residue polypeptide: Asparagine synthetase [glutamine-hydrolyzing] 1 (586 aa).

The active-site For GATase activity is the cysteine 2. The Glutamine amidotransferase type-2 domain occupies 2 to 185; it reads CGILAVLGCS…PGHLYSSRER (184 aa). Residues 50–54, 75–77, and aspartate 98 contribute to the L-glutamine site; these read RLAIV and NGE. Residues 193–516 enclose the Asparagine synthetase domain; it reads PTWFSESIPS…PQNSARLTVP (324 aa). Residues leucine 231, valine 267, and 341-342 each bind ATP; that span reads SG.

It carries out the reaction L-aspartate + L-glutamine + ATP + H2O = L-asparagine + L-glutamate + AMP + diphosphate + H(+). It functions in the pathway amino-acid biosynthesis; L-asparagine biosynthesis; L-asparagine from L-aspartate (L-Gln route): step 1/1. The protein is Asparagine synthetase [glutamine-hydrolyzing] 1 (AS1) of Lotus japonicus (Lotus corniculatus var. japonicus).